The primary structure comprises 427 residues: Light-independent protochlorophyllide reductase subunit N (427 aa).

3 residues coordinate [4Fe-4S] cluster: Cys-30, Cys-55, and Cys-116.

The protein belongs to the BchN/ChlN family. As to quaternary structure, protochlorophyllide reductase is composed of three subunits; BchL, BchN and BchB. Forms a heterotetramer of two BchB and two BchN subunits. Requires [4Fe-4S] cluster as cofactor.

The enzyme catalyses chlorophyllide a + oxidized 2[4Fe-4S]-[ferredoxin] + 2 ADP + 2 phosphate = protochlorophyllide a + reduced 2[4Fe-4S]-[ferredoxin] + 2 ATP + 2 H2O. It functions in the pathway porphyrin-containing compound metabolism; bacteriochlorophyll biosynthesis (light-independent). In terms of biological role, component of the dark-operative protochlorophyllide reductase (DPOR) that uses Mg-ATP and reduced ferredoxin to reduce ring D of protochlorophyllide (Pchlide) to form chlorophyllide a (Chlide). This reaction is light-independent. The NB-protein (BchN-BchB) is the catalytic component of the complex. The protein is Light-independent protochlorophyllide reductase subunit N of Rhodopseudomonas palustris (strain BisA53).